A 137-amino-acid chain; its full sequence is Sporulation-specific cell division protein SsgB (137 aa).

It belongs to the SsgA family. As to quaternary structure, interacts with SsgA. Interacts with FtsZ (via N-terminus).

The protein resides in the cell septum. Functionally, involved in sporulation-specific cell division. Required for early stages of sporulation. Important in the process of growth cessation prior to sporulation-specific cell division. Recruits cell division protein FtsZ to the future septum sites and tethers the contractile ring structure (Z ring) to the cytoplasmic membrane during sporulation. Stimulates polymerization and filament length of FtsZ in vitro. This Streptomyces coelicolor (strain ATCC BAA-471 / A3(2) / M145) protein is Sporulation-specific cell division protein SsgB.